The primary structure comprises 478 residues: DNA gyrase subunit B (478 aa).

One can recognise a Toprim domain in the interval cysteine 319 to proline 438. 3 residues coordinate Mg(2+): glutamate 325, aspartate 403, and aspartate 405.

It belongs to the type II topoisomerase GyrB family. As to quaternary structure, heterotetramer, composed of two GyrA and two GyrB chains. In the heterotetramer, GyrA contains the active site tyrosine that forms a transient covalent intermediate with DNA, while GyrB binds cofactors and catalyzes ATP hydrolysis. Mg(2+) serves as cofactor. Mn(2+) is required as a cofactor. It depends on Ca(2+) as a cofactor.

The protein resides in the cytoplasm. The catalysed reaction is ATP-dependent breakage, passage and rejoining of double-stranded DNA.. In terms of biological role, a type II topoisomerase that negatively supercoils closed circular double-stranded (ds) DNA in an ATP-dependent manner to modulate DNA topology and maintain chromosomes in an underwound state. Negative supercoiling favors strand separation, and DNA replication, transcription, recombination and repair, all of which involve strand separation. Also able to catalyze the interconversion of other topological isomers of dsDNA rings, including catenanes and knotted rings. Type II topoisomerases break and join 2 DNA strands simultaneously in an ATP-dependent manner. The chain is DNA gyrase subunit B (gyrB) from Cytophaga aurantiaca.